A 66-amino-acid polypeptide reads, in one-letter code: Potassium channel toxin alpha-KTx 30.1 (66 aa).

A signal peptide spans 1-24; the sequence is MNTGFFFFVIMATGLVLTFDTIHA. 3 disulfide bridges follow: Cys30/Cys50, Cys36/Cys55, and Cys40/Cys57.

It belongs to the short scorpion toxin superfamily. Potassium channel inhibitor family. Alpha-KTx 30 subfamily. As to expression, expressed by the venom gland.

Its subcellular location is the secreted. Its function is as follows. inhibits Kv1.3/KCNA3 channel (1 uM of the toxin inhibits currents by 64.1%). This chain is Potassium channel toxin alpha-KTx 30.1, found in Scorpiops margerisonae (Scorpion).